A 249-amino-acid chain; its full sequence is Putative [LysW]-aminoadipate/[LysW]-glutamate kinase (249 aa).

Positions 63 and 166 each coordinate substrate.

This sequence belongs to the acetylglutamate kinase family. LysZ subfamily.

The protein resides in the cytoplasm. It catalyses the reaction [amino-group carrier protein]-C-terminal-N-(1,4-dicarboxybutan-1-yl)-L-glutamine + ATP = [amino-group carrier protein]-C-terminal-N-(1-carboxy-5-phosphooxy-5-oxopentan-1-yl)-L-glutamine + ADP. It carries out the reaction [amino-group carrier protein]-C-terminal-gamma-(L-glutamyl)-L-glutamate + ATP = [amino-group carrier protein]-C-terminal-gamma-(5-phospho-L-glutamyl)-L-glutamate + ADP. Its pathway is amino-acid biosynthesis; L-lysine biosynthesis via AAA pathway; L-lysine from L-alpha-aminoadipate (Thermus route): step 2/5. It participates in amino-acid biosynthesis; L-arginine biosynthesis. Functionally, involved in both the arginine and lysine biosynthetic pathways. Phosphorylates the LysW-bound precursors glutamate (for arginine biosynthesis), respectively alpha-aminoadipate (for lysine biosynthesis). This chain is Putative [LysW]-aminoadipate/[LysW]-glutamate kinase, found in Pyrococcus furiosus (strain ATCC 43587 / DSM 3638 / JCM 8422 / Vc1).